A 122-amino-acid polypeptide reads, in one-letter code: S-adenosylmethionine decarboxylase proenzyme (122 aa).

Serine 63 functions as the Schiff-base intermediate with substrate; via pyruvic acid in the catalytic mechanism. A Pyruvic acid (Ser); by autocatalysis modification is found at serine 63. Histidine 68 acts as the Proton acceptor; for processing activity in catalysis. The active-site Proton donor; for catalytic activity is the cysteine 83.

The protein belongs to the prokaryotic AdoMetDC family. Type 1 subfamily. Heterotetramer of two alpha and two beta chains arranged as a dimer of alpha/beta heterodimers. It depends on pyruvate as a cofactor. In terms of processing, is synthesized initially as an inactive proenzyme. Formation of the active enzyme involves a self-maturation process in which the active site pyruvoyl group is generated from an internal serine residue via an autocatalytic post-translational modification. Two non-identical subunits are generated from the proenzyme in this reaction, and the pyruvate is formed at the N-terminus of the alpha chain, which is derived from the carboxyl end of the proenzyme. The post-translation cleavage follows an unusual pathway, termed non-hydrolytic serinolysis, in which the side chain hydroxyl group of the serine supplies its oxygen atom to form the C-terminus of the beta chain, while the remainder of the serine residue undergoes an oxidative deamination to produce ammonia and the pyruvoyl group blocking the N-terminus of the alpha chain.

It catalyses the reaction S-adenosyl-L-methionine + H(+) = S-adenosyl 3-(methylsulfanyl)propylamine + CO2. Its pathway is amine and polyamine biosynthesis; S-adenosylmethioninamine biosynthesis; S-adenosylmethioninamine from S-adenosyl-L-methionine: step 1/1. Functionally, catalyzes the decarboxylation of S-adenosylmethionine to S-adenosylmethioninamine (dcAdoMet), the propylamine donor required for the synthesis of the polyamines spermine and spermidine from the diamine putrescine. In Methanococcus vannielii (strain ATCC 35089 / DSM 1224 / JCM 13029 / OCM 148 / SB), this protein is S-adenosylmethionine decarboxylase proenzyme.